Consider the following 160-residue polypeptide: S-ribosylhomocysteine lyase (160 aa).

Fe cation is bound by residues histidine 57, histidine 61, and cysteine 127.

This sequence belongs to the LuxS family. Homodimer. Fe cation serves as cofactor.

The catalysed reaction is S-(5-deoxy-D-ribos-5-yl)-L-homocysteine = (S)-4,5-dihydroxypentane-2,3-dione + L-homocysteine. In terms of biological role, involved in the synthesis of autoinducer 2 (AI-2) which is secreted by bacteria and is used to communicate both the cell density and the metabolic potential of the environment. The regulation of gene expression in response to changes in cell density is called quorum sensing. Catalyzes the transformation of S-ribosylhomocysteine (RHC) to homocysteine (HC) and 4,5-dihydroxy-2,3-pentadione (DPD). This chain is S-ribosylhomocysteine lyase, found in Streptococcus gordonii (strain Challis / ATCC 35105 / BCRC 15272 / CH1 / DL1 / V288).